The primary structure comprises 228 residues: Cytochrome c oxidase subunit 2 (228 aa).

The Mitochondrial intermembrane portion of the chain corresponds to 1-14 (MANHSQLGFQDASS). Residues 15–45 (PIMEELVEFHDHALIVALAICSLVLYLLAHM) traverse the membrane as a helical segment. Topologically, residues 46 to 58 (LMEKLSSNAVDAQ) are mitochondrial matrix. Residues 59–86 (EVELIWTILPAIVLVLLALPSLQILYMM) traverse the membrane as a helical segment. The Mitochondrial intermembrane portion of the chain corresponds to 87–228 (DEIDEPDLTL…ETWSSLLSAS (142 aa)). His-160, Cys-195, Glu-197, Cys-199, His-203, and Met-206 together coordinate Cu cation. Position 197 (Glu-197) interacts with Mg(2+).

The protein belongs to the cytochrome c oxidase subunit 2 family. In terms of assembly, component of the cytochrome c oxidase (complex IV, CIV), a multisubunit enzyme composed of 14 subunits. The complex is composed of a catalytic core of 3 subunits MT-CO1, MT-CO2 and MT-CO3, encoded in the mitochondrial DNA, and 11 supernumerary subunits COX4I, COX5A, COX5B, COX6A, COX6B, COX6C, COX7A, COX7B, COX7C, COX8 and NDUFA4, which are encoded in the nuclear genome. The complex exists as a monomer or a dimer and forms supercomplexes (SCs) in the inner mitochondrial membrane with NADH-ubiquinone oxidoreductase (complex I, CI) and ubiquinol-cytochrome c oxidoreductase (cytochrome b-c1 complex, complex III, CIII), resulting in different assemblies (supercomplex SCI(1)III(2)IV(1) and megacomplex MCI(2)III(2)IV(2)). Found in a complex with TMEM177, COA6, COX18, COX20, SCO1 and SCO2. Interacts with TMEM177 in a COX20-dependent manner. Interacts with COX20. Interacts with COX16. It depends on Cu cation as a cofactor.

It localises to the mitochondrion inner membrane. The enzyme catalyses 4 Fe(II)-[cytochrome c] + O2 + 8 H(+)(in) = 4 Fe(III)-[cytochrome c] + 2 H2O + 4 H(+)(out). In terms of biological role, component of the cytochrome c oxidase, the last enzyme in the mitochondrial electron transport chain which drives oxidative phosphorylation. The respiratory chain contains 3 multisubunit complexes succinate dehydrogenase (complex II, CII), ubiquinol-cytochrome c oxidoreductase (cytochrome b-c1 complex, complex III, CIII) and cytochrome c oxidase (complex IV, CIV), that cooperate to transfer electrons derived from NADH and succinate to molecular oxygen, creating an electrochemical gradient over the inner membrane that drives transmembrane transport and the ATP synthase. Cytochrome c oxidase is the component of the respiratory chain that catalyzes the reduction of oxygen to water. Electrons originating from reduced cytochrome c in the intermembrane space (IMS) are transferred via the dinuclear copper A center (CU(A)) of subunit 2 and heme A of subunit 1 to the active site in subunit 1, a binuclear center (BNC) formed by heme A3 and copper B (CU(B)). The BNC reduces molecular oxygen to 2 water molecules using 4 electrons from cytochrome c in the IMS and 4 protons from the mitochondrial matrix. In Cairina moschata (Muscovy duck), this protein is Cytochrome c oxidase subunit 2 (MT-CO2).